Consider the following 225-residue polypeptide: NAD(P)H-hydrate epimerase (225 aa).

The region spanning 9 to 209 (MQTIDNYTVE…DIGLLTPQDF (201 aa)) is the YjeF N-terminal domain. 57-61 (NNGAD) provides a ligand contact to (6S)-NADPHX. Residues N58 and D119 each contribute to the K(+) site. Residues 123 to 129 (GTGLNNL) and D152 contribute to the (6S)-NADPHX site. T155 provides a ligand contact to K(+).

It belongs to the NnrE/AIBP family. The cofactor is K(+).

The catalysed reaction is (6R)-NADHX = (6S)-NADHX. It catalyses the reaction (6R)-NADPHX = (6S)-NADPHX. Catalyzes the epimerization of the S- and R-forms of NAD(P)HX, a damaged form of NAD(P)H that is a result of enzymatic or heat-dependent hydration. This is a prerequisite for the S-specific NAD(P)H-hydrate dehydratase to allow the repair of both epimers of NAD(P)HX. In Leuconostoc kimchii (strain IMSNU 11154 / KCTC 2386 / IH25), this protein is NAD(P)H-hydrate epimerase.